Reading from the N-terminus, the 274-residue chain is MTLQQQIIEELRVQPTINAQEEIRKSIDFLKEYAKHYSFVKGFVLGISGGQDSTLTGKLAQLAVDELNKEVGEMKYSFWAIRLPYGVQADEQDCQDAIDYIKPTGSYTVNIKDAVDASVKALANAGVELNDFVKGNEKARERMKVQYSIAAMNGGVVLGTDHAAEAITGFYTKFGDGGADLMPIFRLNKRQGKQLLAELNCPEHLYTKVPTADLEENRPSLPDEVALGVSYDQIDDYLEGKEIPEEPRQLLEGYYLRSQHKRHMPITIFDVFWK.

Position 46-53 (46-53) interacts with ATP; it reads GISGGQDS. Aspartate 52 lines the Mg(2+) pocket. Residue arginine 140 participates in deamido-NAD(+) binding. Threonine 160 provides a ligand contact to ATP. Mg(2+) is bound at residue glutamate 165. Deamido-NAD(+) contacts are provided by lysine 173 and aspartate 180. Lysine 189 and threonine 211 together coordinate ATP. Deamido-NAD(+) is bound at residue 260–261; that stretch reads HK.

Belongs to the NAD synthetase family. In terms of assembly, homodimer.

It catalyses the reaction deamido-NAD(+) + NH4(+) + ATP = AMP + diphosphate + NAD(+) + H(+). Its pathway is cofactor biosynthesis; NAD(+) biosynthesis; NAD(+) from deamido-NAD(+) (ammonia route): step 1/1. Its function is as follows. Catalyzes the ATP-dependent amidation of deamido-NAD to form NAD. Uses ammonia as a nitrogen source. The chain is NH(3)-dependent NAD(+) synthetase from Lysinibacillus sphaericus (strain C3-41).